The following is a 202-amino-acid chain: CASP-like protein 1E1 (202 aa).

Over 1-33 (MESQCRPNVDGVHNGVESHVKVVEKPRSVGSSS) the chain is Cytoplasmic. A helical transmembrane segment spans residues 34-54 (EFVLRILGLLLTLIAAVVAGV). The Extracellular segment spans residues 55–85 (DKQTKIIPLTLIKTLPSLHVPVTAKWSDMSA). A helical transmembrane segment spans residues 86–106 (FVYLVVSNAIACSYAAISLVL). The Cytoplasmic segment spans residues 107 to 118 (VTMLGRRGKGGR). Residues 119-139 (VLAVIVLDLHMVGLLFSANGA) traverse the membrane as a helical segment. Residues 140–172 (ATAVGVLGQYGNSHVEWKKVCNVFDSFCHHLVA) lie on the Extracellular side of the membrane. The chain crosses the membrane as a helical span at residues 173–193 (SLALSFLGSLSFLGLVLLAIL). Residues 194–202 (NLHKKSSTK) lie on the Cytoplasmic side of the membrane.

This sequence belongs to the Casparian strip membrane proteins (CASP) family. As to quaternary structure, homodimer and heterodimers.

It localises to the cell membrane. This is CASP-like protein 1E1 from Vitis vinifera (Grape).